The sequence spans 565 residues: Oxygen-dependent choline dehydrogenase (565 aa).

7–36 contributes to the FAD binding site; that stretch reads DYIICGAGSAGNVLATRLTEDPGVTVLLLE. Catalysis depends on H474, which acts as the Proton acceptor.

This sequence belongs to the GMC oxidoreductase family. FAD is required as a cofactor.

It catalyses the reaction choline + A = betaine aldehyde + AH2. It carries out the reaction betaine aldehyde + NAD(+) + H2O = glycine betaine + NADH + 2 H(+). It functions in the pathway amine and polyamine biosynthesis; betaine biosynthesis via choline pathway; betaine aldehyde from choline (cytochrome c reductase route): step 1/1. In terms of biological role, involved in the biosynthesis of the osmoprotectant glycine betaine. Catalyzes the oxidation of choline to betaine aldehyde and betaine aldehyde to glycine betaine at the same rate. The protein is Oxygen-dependent choline dehydrogenase of Burkholderia pseudomallei (strain K96243).